The following is a 276-amino-acid chain: MAIRVYKPTTAGRRNASVSDFSELTRSTPEKSLVRKLSKTGGRNSYGRMTSRHRGGGHKRQYRLIDFKRWDKDGVPAKVAHIEYDPNRSARIALLHYADGEKRYIIAPEGIKQGDVIETGAQADIKPGNNLPLRNIPTGTVVHAIELRPLGGAKIARSAGAAVQLVAKDGAYAQLRMPSGEIRNVDARCRATVGEVGNSDHANIQLGKAGRARWMGKRPITRGESMNPVDHPHGGRTRGGKPPVSPWGKGEVRTRRPKKASNKMIVRRRPNGKNRK.

Disordered stretches follow at residues 35–58 (RKLSKTGGRNSYGRMTSRHRGGGH) and 218–276 (RPIT…KNRK). Basic residues predominate over residues 255-276 (RRPKKASNKMIVRRRPNGKNRK).

This sequence belongs to the universal ribosomal protein uL2 family. Part of the 50S ribosomal subunit. Forms a bridge to the 30S subunit in the 70S ribosome.

Functionally, one of the primary rRNA binding proteins. Required for association of the 30S and 50S subunits to form the 70S ribosome, for tRNA binding and peptide bond formation. It has been suggested to have peptidyltransferase activity; this is somewhat controversial. Makes several contacts with the 16S rRNA in the 70S ribosome. This is Large ribosomal subunit protein uL2 from Bifidobacterium adolescentis (strain ATCC 15703 / DSM 20083 / NCTC 11814 / E194a).